A 207-amino-acid chain; its full sequence is Small ribosomal subunit protein uS4c (207 aa).

The 62-residue stretch at 92–153 folds into the S4 RNA-binding domain; sequence MRLDNILFRL…PKIYQSIITK (62 aa).

This sequence belongs to the universal ribosomal protein uS4 family. In terms of assembly, part of the 30S ribosomal subunit. Contacts protein S5. The interaction surface between S4 and S5 is involved in control of translational fidelity.

The protein resides in the plastid. Its subcellular location is the chloroplast. One of the primary rRNA binding proteins, it binds directly to 16S rRNA where it nucleates assembly of the body of the 30S subunit. Its function is as follows. With S5 and S12 plays an important role in translational accuracy. The sequence is that of Small ribosomal subunit protein uS4c (rps4) from Equisetum bogotense (Horsetail).